The sequence spans 327 residues: Pyruvate dehydrogenase E1 component subunit beta (327 aa).

A thiamine diphosphate-binding site is contributed by glutamate 60. Residues isoleucine 113, alanine 161, isoleucine 162, and asparagine 166 each contribute to the K(+) site.

Heterodimer of an alpha and a beta chain. The cofactor is thiamine diphosphate.

The protein localises to the plastid. The protein resides in the chloroplast. It carries out the reaction N(6)-[(R)-lipoyl]-L-lysyl-[protein] + pyruvate + H(+) = N(6)-[(R)-S(8)-acetyldihydrolipoyl]-L-lysyl-[protein] + CO2. Its function is as follows. The pyruvate dehydrogenase complex catalyzes the overall conversion of pyruvate to acetyl-CoA and CO(2). It contains multiple copies of three enzymatic components: pyruvate dehydrogenase (E1), dihydrolipoamide acetyltransferase (E2) and lipoamide dehydrogenase (E3). This Mesostigma viride (Green alga) protein is Pyruvate dehydrogenase E1 component subunit beta (pdhB).